A 243-amino-acid polypeptide reads, in one-letter code: DNA repair protein RecO (243 aa).

It belongs to the RecO family.

In terms of biological role, involved in DNA repair and RecF pathway recombination. The sequence is that of DNA repair protein RecO from Xylella fastidiosa (strain M12).